The sequence spans 196 residues: Aequorin-2 (196 aa).

A propeptide spanning residues 1–7 is cleaved from the precursor; that stretch reads MTSKQYS. EF-hand domains lie at 18–53, 54–108, 117–146, and 147–182; these read RWIG…IVIN, NLGA…AKNE, DALF…AGII, and QSSE…FWYT. Ca(2+)-binding residues include Asp31, Asn33, Asn35, Lys37, and Glu42. May interact with the chromophore stretches follow at residues 47–57, 62–72, and 107–117; these read ASDIVINNLGA, AKRHKDAVEAF, and NEPTLIRIWGD. Ca(2+) is bound by residues Asp124, Asp126, Asn128, Glu135, Asp160, Asp162, Ser164, Gln166, and Glu171.

The protein belongs to the aequorin family. In terms of processing, the reduction of the disulfide bond is necessary to regenerate aequorin from apoaequorin.

Its function is as follows. Ca(2+)-dependent bioluminescence photoprotein. Displays an emission peak at 470 nm (blue light). Trace amounts of calcium ion trigger the intramolecular oxidation of the chromophore, coelenterazine into coelenteramide and CO(2) with the concomitant emission of light. The protein is Aequorin-2 of Aequorea victoria (Water jellyfish).